An 837-amino-acid chain; its full sequence is Valine--tRNA ligase (837 aa).

Residues Pro-46–His-56 carry the 'HIGH' region motif. The 'KMSKS' region signature appears at Lys-514 to Ser-518. Lys-517 lines the ATP pocket. A coiled-coil region spans residues Val-767–His-837.

It belongs to the class-I aminoacyl-tRNA synthetase family. ValS type 1 subfamily. In terms of assembly, monomer.

It is found in the cytoplasm. The catalysed reaction is tRNA(Val) + L-valine + ATP = L-valyl-tRNA(Val) + AMP + diphosphate. Its function is as follows. Catalyzes the attachment of valine to tRNA(Val). As ValRS can inadvertently accommodate and process structurally similar amino acids such as threonine, to avoid such errors, it has a 'posttransfer' editing activity that hydrolyzes mischarged Thr-tRNA(Val) in a tRNA-dependent manner. The polypeptide is Valine--tRNA ligase (Mycoplasma genitalium (strain ATCC 33530 / DSM 19775 / NCTC 10195 / G37) (Mycoplasmoides genitalium)).